Reading from the N-terminus, the 308-residue chain is MDWKGRDVISIRDFSKEDIEIVLSTAERLEKELKEKGQLEYARGKILATLFFEPSTRTRLSFESAMHRLGGAVIGFAEASTSSVKKGESLADTIKTVEQYSDVIVIRHPKEGAARLAAEVAEIPVINAGDGSNQHPTQTLLDLYTIRKEFGKIDGLKIGLLGDLKYGRTVHSLAEALAYYDVELYLISPELLRMPRHIVEELREKGVTVYETSDLMSVIGELDVLYVTRIQKERFPDEQEYLKVRGSYQVNLQVLSKAKETLKVMHPLPRVDEIHPEVDKTKHAIYFKQVFNGIPVRMALLGLVLGVI.

Residues arginine 57 and threonine 58 each contribute to the carbamoyl phosphate site. An L-aspartate-binding site is contributed by lysine 86. Positions 107, 135, and 138 each coordinate carbamoyl phosphate. L-aspartate is bound by residues arginine 168 and arginine 229. Carbamoyl phosphate-binding residues include leucine 268 and proline 269.

The protein belongs to the aspartate/ornithine carbamoyltransferase superfamily. ATCase family. As to quaternary structure, heterooligomer of catalytic and regulatory chains.

The catalysed reaction is carbamoyl phosphate + L-aspartate = N-carbamoyl-L-aspartate + phosphate + H(+). It functions in the pathway pyrimidine metabolism; UMP biosynthesis via de novo pathway; (S)-dihydroorotate from bicarbonate: step 2/3. Its function is as follows. Catalyzes the condensation of carbamoyl phosphate and aspartate to form carbamoyl aspartate and inorganic phosphate, the committed step in the de novo pyrimidine nucleotide biosynthesis pathway. The protein is Aspartate carbamoyltransferase catalytic subunit of Pyrococcus furiosus (strain ATCC 43587 / DSM 3638 / JCM 8422 / Vc1).